Consider the following 180-residue polypeptide: UPF0227 protein YcfP (180 aa).

It belongs to the UPF0227 family.

The polypeptide is UPF0227 protein YcfP (Salmonella agona (strain SL483)).